The sequence spans 87 residues: Small ribosomal subunit protein bS20 (87 aa).

A disordered region spans residues M1 to R20.

It belongs to the bacterial ribosomal protein bS20 family.

Binds directly to 16S ribosomal RNA. This is Small ribosomal subunit protein bS20 from Campylobacter lari (strain RM2100 / D67 / ATCC BAA-1060).